The primary structure comprises 176 residues: ATP-dependent protease subunit HslV (176 aa).

The active site involves T2. Na(+) contacts are provided by G157, C160, and T163.

The protein belongs to the peptidase T1B family. HslV subfamily. As to quaternary structure, a double ring-shaped homohexamer of HslV is capped on each side by a ring-shaped HslU homohexamer. The assembly of the HslU/HslV complex is dependent on binding of ATP.

Its subcellular location is the cytoplasm. The enzyme catalyses ATP-dependent cleavage of peptide bonds with broad specificity.. Its activity is regulated as follows. Allosterically activated by HslU binding. Protease subunit of a proteasome-like degradation complex believed to be a general protein degrading machinery. In Enterobacter sp. (strain 638), this protein is ATP-dependent protease subunit HslV.